The sequence spans 609 residues: Granule-bound starch synthase 1, chloroplastic/amyloplastic (609 aa).

The transit peptide at 1–77 (MSALTTSQLA…SRRFPSVVVY (77 aa)) directs the protein to the chloroplast. The disordered stretch occupies residues 29–67 (RHGFQGLKPRSPAGGDATSLSVTTSARATPKQQRSVQRG). The span at 46–66 (TSLSVTTSARATPKQQRSVQR) shows a compositional bias: polar residues. Residue K97 coordinates ADP-alpha-D-glucose. Positions 100, 408, 413, 462, and 493 each coordinate ADP. A disulfide bridge links C337 with C529.

This sequence belongs to the glycosyltransferase 1 family. Bacterial/plant glycogen synthase subfamily.

It is found in the plastid. Its subcellular location is the chloroplast. The protein resides in the amyloplast. It catalyses the reaction an NDP-alpha-D-glucose + [(1-&gt;4)-alpha-D-glucosyl](n) = [(1-&gt;4)-alpha-D-glucosyl](n+1) + a ribonucleoside 5'-diphosphate + H(+). The protein operates within glycan biosynthesis; starch biosynthesis. Functionally, required for the synthesis of amylose in endosperm. This Oryza sativa subsp. indica (Rice) protein is Granule-bound starch synthase 1, chloroplastic/amyloplastic (WAXY).